A 109-amino-acid chain; its full sequence is Large ribosomal subunit protein uL22 (109 aa).

Belongs to the universal ribosomal protein uL22 family. Part of the 50S ribosomal subunit.

Its function is as follows. This protein binds specifically to 23S rRNA; its binding is stimulated by other ribosomal proteins, e.g. L4, L17, and L20. It is important during the early stages of 50S assembly. It makes multiple contacts with different domains of the 23S rRNA in the assembled 50S subunit and ribosome. In terms of biological role, the globular domain of the protein is located near the polypeptide exit tunnel on the outside of the subunit, while an extended beta-hairpin is found that lines the wall of the exit tunnel in the center of the 70S ribosome. This Psychrobacter sp. (strain PRwf-1) protein is Large ribosomal subunit protein uL22.